A 337-amino-acid polypeptide reads, in one-letter code: Glyceraldehyde-3-phosphate dehydrogenase (337 aa).

NAD(+) is bound by residues 12–13, aspartate 34, and lysine 79; that span reads RI. D-glyceraldehyde 3-phosphate-binding positions include 150–152, threonine 181, 210–211, and arginine 233; these read SCT and TG. Cysteine 151 acts as the Nucleophile in catalysis. Asparagine 315 contacts NAD(+).

The protein belongs to the glyceraldehyde-3-phosphate dehydrogenase family. In terms of assembly, homotetramer. As to expression, expressed in all tissues examined.

The protein resides in the cytoplasm. It catalyses the reaction D-glyceraldehyde 3-phosphate + phosphate + NAD(+) = (2R)-3-phospho-glyceroyl phosphate + NADH + H(+). It participates in carbohydrate degradation; glycolysis; pyruvate from D-glyceraldehyde 3-phosphate: step 1/5. The sequence is that of Glyceraldehyde-3-phosphate dehydrogenase (gpd) from Lentinula edodes (Shiitake mushroom).